A 407-amino-acid polypeptide reads, in one-letter code: Imidazolonepropionase (407 aa).

The Fe(3+) site is built by H68 and H70. H68 and H70 together coordinate Zn(2+). 4-imidazolone-5-propanoate-binding residues include R77, Y140, and H173. Position 140 (Y140) interacts with N-formimidoyl-L-glutamate. H238 lines the Fe(3+) pocket. Zn(2+) is bound at residue H238. Q241 serves as a coordination point for 4-imidazolone-5-propanoate. D313 contacts Fe(3+). D313 provides a ligand contact to Zn(2+). N315 and G317 together coordinate N-formimidoyl-L-glutamate. T318 contacts 4-imidazolone-5-propanoate.

This sequence belongs to the metallo-dependent hydrolases superfamily. HutI family. It depends on Zn(2+) as a cofactor. Fe(3+) serves as cofactor.

Its subcellular location is the cytoplasm. The catalysed reaction is 4-imidazolone-5-propanoate + H2O = N-formimidoyl-L-glutamate. It functions in the pathway amino-acid degradation; L-histidine degradation into L-glutamate; N-formimidoyl-L-glutamate from L-histidine: step 3/3. Its function is as follows. Catalyzes the hydrolytic cleavage of the carbon-nitrogen bond in imidazolone-5-propanoate to yield N-formimidoyl-L-glutamate. It is the third step in the universal histidine degradation pathway. The chain is Imidazolonepropionase from Burkholderia cenocepacia (strain ATCC BAA-245 / DSM 16553 / LMG 16656 / NCTC 13227 / J2315 / CF5610) (Burkholderia cepacia (strain J2315)).